The following is a 6733-amino-acid chain: Replicase polyprotein 1ab (6733 aa).

The Macro domain occupies 1633–1814; that stretch reads FNQYYEFKVG…QYIEALGVVE (182 aa). Residues 2183–2565 form an HD1 region; it reads LTHVNKFKIV…IMLPVFVIIL (383 aa). A run of 10 helical transmembrane segments spans residues 2191-2211, 2219-2239, 2266-2286, 2411-2431, 2521-2541, 2546-2566, 2769-2789, 2937-2957, 2986-3006, and 3022-3042; these read IVVY…DFSL, VFLL…LGLV, GVHW…DFFV, ALWF…PLMF, VAVS…IVVL, FVWF…IILF, VMLI…FMVG, IISP…FLFL, VLFV…LALW, and LFIL…GFVF. The interval 2769-3042 is HD2; sequence VMLIIALGAI…FVLIVGGFVF (274 aa). Catalysis depends on charge relay system; for 3C-like serine proteinase activity residues H3184, E3222, and S3291. Helical transmembrane passes span 3422–3442, 3456–3478, 3486–3506, 3514–3534, 3538–3558, 3573–3593, and 3598–3613; these read SNVS…FLVC, VVLP…VLFW, LAVT…LGLF, VGLI…VVVN, AIFV…LGVV, AVFA…LILF, and LMSF…FRVF. The segment at 3430-3613 is HD3; that stretch reads NLHFIFSVYF…VVIVLSFRVF (184 aa). Residues 4442–4673 form the NiRAN domain; the sequence is DFKLLRDVWC…AKEMNVPADF (232 aa). A RdRp catalytic domain is found at 4981–5132; the sequence is FDVFGSDYTK…FSKPGALKIF (152 aa). The CV ZBD domain occupies 5289–5404; sequence FDRVCFCCPN…NGVAQLLTPV (116 aa). Zn(2+) is bound by residues C5293, C5296, C5304, C5307, C5314, C5317, H5321, H5327, C5336, C5338, C5359, and C5362. The 180-residue stretch at 5509 to 5688 folds into the (+)RNA virus helicase ATP-binding domain; it reads NQPWRLATCF…LQLATQKRYL (180 aa). One can recognise a (+)RNA virus helicase C-terminal domain in the interval 5689–5848; the sequence is TACYRCPPQI…FGMEKQSDFN (160 aa). One can recognise an ExoN domain in the interval 5846-6059; that stretch reads DFNIIPEVAS…YLASYDAAFK (214 aa). Catalysis depends on residues D5860, E5862, and D5961. Zn(2+) is bound by residues H6025, C6029, and H6033. Residues H6037 and D6042 contribute to the active site. C6048 is a Zn(2+) binding site. One can recognise a NendoU domain in the interval 6327-6467; the sequence is LPETLFSTGR…GEDDIQTFYP (141 aa). Active-site residues include H6363, H6380, K6412, K6509, D6585, K6613, and E6647. Positions 6469 to 6733 constitute a Nidovirus-type SAM-dependent 2'-O-MTase domain; the sequence is KEFIRSYYEW…EVPLLCQMKH (265 aa).

In terms of processing, specific enzymatic cleavages in vivo by its own protease yield mature proteins. 3CL-PRO is autocatalytically processed.

It is found in the host membrane. The catalysed reaction is RNA(n) + a ribonucleoside 5'-triphosphate = RNA(n+1) + diphosphate. It catalyses the reaction ATP + H2O = ADP + phosphate + H(+). Its function is as follows. The 3C-like serine proteinase is responsible for the majority of cleavages. Functionally, the helicase which contains a zinc finger structure displays RNA and DNA duplex-unwinding activities with 5' to 3' polarity. In terms of biological role, acts on both ssRNA and dsRNA in a 3' to 5' direction. NendoU is a Mn(2+)-dependent, uridylate-specific enzyme, which leaves 2'-3'-cyclic phosphates 5' to the cleaved bond. This is Replicase polyprotein 1ab (rep) from Bos taurus (Bovine).